Consider the following 173-residue polypeptide: Phosphopantetheine adenylyltransferase (173 aa).

Residue serine 9 participates in substrate binding. ATP is bound by residues 9-10 (SF) and histidine 17. The substrate site is built by lysine 41, threonine 73, and arginine 87. ATP-binding positions include 88–90 (GLR), glutamate 98, and 123–129 (YQHLSSS).

It belongs to the bacterial CoaD family. Homohexamer. It depends on Mg(2+) as a cofactor.

The protein resides in the cytoplasm. It carries out the reaction (R)-4'-phosphopantetheine + ATP + H(+) = 3'-dephospho-CoA + diphosphate. The protein operates within cofactor biosynthesis; coenzyme A biosynthesis; CoA from (R)-pantothenate: step 4/5. Reversibly transfers an adenylyl group from ATP to 4'-phosphopantetheine, yielding dephospho-CoA (dPCoA) and pyrophosphate. This is Phosphopantetheine adenylyltransferase from Limosilactobacillus reuteri (strain DSM 20016) (Lactobacillus reuteri).